Here is a 257-residue protein sequence, read N- to C-terminus: E3 ubiquitin-protein ligase RNF170 (257 aa).

Residues 1-24 (MADNQEERPHFPLDEGSIIEGVSD) are Lumenal-facing. A helical membrane pass occupies residues 25–45 (QVIVVVLLSFVAVGSLIYLLL). Residues 46-200 (RNDEQNIHPE…GGLFWMFRIR (155 aa)) are Cytoplasmic-facing. The RING-type zinc-finger motif lies at 87–130 (CPVCLQQATFPVETNCGHLFCGSCIIAYWRYGTWLGAINCPICR). A helical transmembrane segment spans residues 201-221 (IVLCLLGALLYLVSPLDIIPE). A topological domain (lumenal) is located at residue alanine 222. Residues 223–243 (LFGILGFLDDLFVLFLLLIYI) form a helical membrane-spanning segment. At 244–257 (SIMYREVVTQRLYR) the chain is on the cytoplasmic side.

The protein resides in the endoplasmic reticulum membrane. It carries out the reaction S-ubiquitinyl-[E2 ubiquitin-conjugating enzyme]-L-cysteine + [acceptor protein]-L-lysine = [E2 ubiquitin-conjugating enzyme]-L-cysteine + N(6)-ubiquitinyl-[acceptor protein]-L-lysine.. It participates in protein modification; protein ubiquitination. E3 ubiquitin-protein ligase that plays an essential role in stimulus-induced inositol 1,4,5-trisphosphate receptor (ITPR) ubiquitination and degradation via the endoplasmic reticulum-associated degradation (ERAD) pathway. Also involved in ITPR turnover in resting cells. In Xenopus laevis (African clawed frog), this protein is E3 ubiquitin-protein ligase RNF170 (rnf170).